Here is a 281-residue protein sequence, read N- to C-terminus: Hydroxyethylthiazole kinase (281 aa).

Residues Arg-124 and Ser-169 each coordinate ATP.

The protein belongs to the Thz kinase family. It depends on Mg(2+) as a cofactor.

It carries out the reaction 5-(2-hydroxyethyl)-4-methylthiazole + ATP = 4-methyl-5-(2-phosphooxyethyl)-thiazole + ADP + H(+). Its pathway is cofactor biosynthesis; thiamine diphosphate biosynthesis; 4-methyl-5-(2-phosphoethyl)-thiazole from 5-(2-hydroxyethyl)-4-methylthiazole: step 1/1. Functionally, catalyzes the phosphorylation of the hydroxyl group of 4-methyl-5-beta-hydroxyethylthiazole (THZ). In Rhodococcus erythropolis (strain PR4 / NBRC 100887), this protein is Hydroxyethylthiazole kinase.